The primary structure comprises 735 residues: Mitochondrial potassium channel ATP-binding subunit (735 aa).

Residues 1 to 25 (MLVHLFRVGIRGGPFPGRLLPPLRF) constitute a mitochondrion transit peptide. Residues 26–144 (QTFSAVRNTW…KLFWQFLHPH (119 aa)) lie on the Mitochondrial matrix side of the membrane. A helical transmembrane segment spans residues 145 to 165 (LLVLGVAVVLALGAALVNVQI). Residues 150 to 437 (VAVVLALGAA…LSVLFGQVVR (288 aa)) form the ABC transmembrane type-1 domain. Residues 166-195 (PLLLGQLVEVVAKYTRDHVGSFMTESQNLS) are Mitochondrial intermembrane-facing. Residues 196–216 (THLLILYGVQGLLTFGYLVLL) form a helical membrane-spanning segment. The Mitochondrial matrix segment spans residues 217–295 (SHVGERMAVD…SLSMLSTRLT (79 aa)). The helical transmembrane segment at 296 to 316 (LLLMVATPALMGVGTLMGSGL) threads the bilayer. The Mitochondrial intermembrane portion of the chain corresponds to 317-735 (RKLSRQCQEQ…EGPRSHQHKS (419 aa)). One can recognise an ABC transporter domain in the interval 472-709 (VTFQNVCFSY…GGLYAELIRR (238 aa)). 507-514 (GQSGGGKT) is an ATP binding site. Residues 712-735 (LDAPRTAAPPPKKPEGPRSHQHKS) are disordered.

It belongs to the ABC transporter superfamily. ABCB family. Multidrug resistance exporter (TC 3.A.1.201) subfamily. In terms of assembly, the mitochondrial potassium channel (mitoK(ATP)) is composed of 4 subunits of CCDC51/MITOK and 4 subunits of ABCB8/MITOSUR. Interacts with C10orf88/PAAT. Interacts with NRP1; NRP1 regulates ABCB8/MITOSUR protein levels in mitochondria. In terms of tissue distribution, ubiquitous.

Its subcellular location is the mitochondrion inner membrane. With respect to regulation, channel activity inhibited by ATP via ABCB8/MITOSUR subunit. Functionally, ATP-binding subunit of the mitochondrial ATP-gated potassium channel (mitoK(ATP)). Together with pore-forming subunit CCDC51/MITOK of the mitoK(ATP) channel, mediates ATP-dependent potassium currents across the mitochondrial inner membrane. An increase in ATP intracellular levels closes the channel, inhibiting K(+) transport, whereas a decrease in ATP levels enhances K(+) uptake in the mitochondrial matrix. Plays a role in mitochondrial iron transport. Required for maintenance of normal cardiac function, possibly by influencing mitochondrial iron export and regulating the maturation of cytosolic iron sulfur cluster-containing enzymes. This chain is Mitochondrial potassium channel ATP-binding subunit, found in Homo sapiens (Human).